The chain runs to 10287 residues: Putative E3 ubiquitin-protein ligase protein PFF1365c (10287 aa).

The TPR 1 repeat unit spans residues 47 to 82 (TRFFKSISNYGEFLLLQSSSRVISSYEHILRLLHQA). Residues 566–589 (TNKSRDNINQNTNTNNNNNNNNNN) show a composition bias toward low complexity. Positions 566-592 (TNKSRDNINQNTNTNNNNNNNNNNDGD) are disordered. Residues 631-665 (YPMFLKIQNKPQRCLKDISKPCEYYSNTLPIYGSY) form a TPR 2 repeat. Disordered stretches follow at residues 740 to 823 (KSSV…NKKK), 1221 to 1251 (NNSN…SSSS), and 1599 to 1670 (YVDD…DDNN). Low complexity-rich tracts occupy residues 767 to 810 (KANN…NNNN), 1221 to 1235 (NNSN…THNS), and 1242 to 1251 (SSSTYSSSSS). Over residues 1601–1635 (DDNEEDEGEEDKSEDYEYCDDEQQNDVYEDTEEES) the composition is skewed to acidic residues. The segment covering 1641–1653 (RKERRVHQKKKNS) has biased composition (basic residues). The segment covering 1654 to 1670 (KVSINKKTNNSLSDDNN) has biased composition (low complexity). 3 helical membrane-spanning segments follow: residues 1821–1841 (ACTF…TLFV), 1860–1880 (LKMA…GLLT), and 1900–1920 (ECCI…TIMI). Basic residues predominate over residues 2070–2080 (SRRGIPLKKKS). A disordered region spans residues 2070 to 2112 (SRRGIPLKKKSERNNSKEENVNNMDHNNNNNSNSNNNNFFHRG). Positions 2090–2107 (VNNMDHNNNNNSNSNNNN) are enriched in low complexity. One copy of the ANK 1 repeat lies at 2116–2145 (TNPRNNNITCDRKNMEFLKKLMKNDHDAVQ). The TPR 3 repeat unit spans residues 2141–2175 (HDAVQCLGKAYSVFHKNFERAQIAFVAVFLHLTGY). Over residues 2854–2865 (NLSSNKRSQKGY) the composition is skewed to polar residues. Disordered regions lie at residues 2854 to 2945 (NLSS…SKEP), 3087 to 3113 (KNRN…NNIN), 3303 to 3344 (NGHT…NDRG), 3561 to 3599 (FSKG…SSIN), 3942 to 3998 (TMEN…KDHI), 4076 to 4157 (LFNS…INYY), 4695 to 4716 (EKKN…KEEG), 4886 to 4972 (SPYF…LRNS), and 4984 to 5051 (YRNK…SNAD). A compositionally biased stretch (basic and acidic residues) spans 2886 to 2929 (SLDKYNDKEKKNDKINNGDTKNSDDGKIDMDDKKYYNDDLKNSD). The span at 3090–3113 (NSNNNNNNNNTNNSNNSNNNNNIN) shows a compositional bias: low complexity. Acidic residues predominate over residues 3316-3335 (YDDDNCDNYDNYDNDNENDN). 2 stretches are compositionally biased toward basic and acidic residues: residues 3567–3579 (KKEM…EKIK) and 3965–3974 (PSKDKSKHYN). Low complexity predominate over residues 3975–3992 (DNNNNNNDDNNSNNNNDY). Positions 4079-4094 (SKKDGSSNNDKNDNSN) are enriched in basic and acidic residues. Low complexity-rich tracts occupy residues 4095–4116 (KNRN…NNNN) and 4124–4157 (NINN…INYY). A compositionally biased stretch (polar residues) spans 4906-4917 (YNIQNSDNSNIG). 2 stretches are compositionally biased toward low complexity: residues 4918 to 4942 (DSEL…DSLN) and 4953 to 4972 (NSSS…LRNS). A compositionally biased stretch (basic residues) spans 5026-5045 (KIKKNKSYKNKTHKNKKQKN). 5 helical membrane-spanning segments follow: residues 5058-5078 (LYGY…CIIL), 5106-5126 (FIKL…KYFA), 5552-5572 (EEIL…YYLG), 5716-5736 (LPIF…VVYI), and 5815-5835 (FLSY…NQII). Residues 5848-5917 (VNKNKGNDNV…NNNNVRNSNN (70 aa)) are disordered. Residues 6004 to 6032 (GINSLYVNGTNGNLKTDKILLHNFSNFDL) form an ANK 2 repeat. The stretch at 6051–6084 (LVHYFACAAYYIKRADVYNIMNYYNEHTHANFKQ) is one TPR 4 repeat. 3 disordered regions span residues 6495–6527 (EEEK…HEKK), 7123–7147 (EKKK…DNNR), and 7183–7217 (NKNN…CSNS). The span at 6501 to 6527 (ENEKEVEKDENVHDEKDKVEQIEHEKK) shows a compositional bias: basic and acidic residues. A compositionally biased stretch (polar residues) spans 7129-7147 (GSNNIGSNTNIHELSDNNR). 2 TPR repeats span residues 7347–7380 (SNDS…KPFI) and 7577–7610 (NNNN…YDDI). Over residues 7571–7583 (DDGNNNNNNNDSM) the composition is skewed to low complexity. 2 disordered regions span residues 7571 to 7590 (DDGN…KDDM) and 7653 to 7712 (SNER…VNNI). Residues 7696-7706 (DNNKDKDDGNH) show a composition bias toward basic and acidic residues. ANK repeat units lie at residues 7809–7839 (KYLT…NPNK), 7845–7875 (EKET…QVNK), and 7880–7917 (GNTA…DLTI). Disordered stretches follow at residues 8208 to 8300 (LKDD…SAKN) and 8413 to 8448 (ALNS…NNYN). A compositionally biased stretch (basic and acidic residues) spans 8219-8259 (YQKPYDKKVINKNKNDNYDKNDNYDKKDNYDTNDKNDKNNC). Over residues 8277 to 8300 (VMNTNSSGRRTISKNSPNLSSAKN) the composition is skewed to polar residues. The segment covering 8415 to 8448 (NSNMSNNNNNNNNSNNNNNNNSNNNNNNYNNNYN) has biased composition (low complexity). TPR repeat units lie at residues 8782–8815 (QTCD…SNNI) and 9550–9584 (DLPI…ITSS). Disordered stretches follow at residues 9795-9818 (MGSD…HKYD) and 9913-9979 (NVLL…SKNT). 2 stretches are compositionally biased toward basic and acidic residues: residues 9800–9818 (ILKD…HKYD) and 9913–9930 (NVLL…DDIR). A compositionally biased stretch (low complexity) spans 9931-9971 (NNMNNNNNNNNNNNNNNNNNNNNNNNNNNNNNNNNNNNNLN). An HECT domain is found at 9938-10273 (NNNNNNNNNN…IKNCTAIDLD (336 aa)). Cysteine 10241 serves as the catalytic Glycyl thioester intermediate.

It localises to the membrane. It catalyses the reaction S-ubiquitinyl-[E2 ubiquitin-conjugating enzyme]-L-cysteine + [acceptor protein]-L-lysine = [E2 ubiquitin-conjugating enzyme]-L-cysteine + N(6)-ubiquitinyl-[acceptor protein]-L-lysine.. Its pathway is protein modification; protein ubiquitination. In terms of biological role, putative E3 ubiquitin-protein ligase. The polypeptide is Putative E3 ubiquitin-protein ligase protein PFF1365c (Plasmodium falciparum (isolate 3D7)).